The following is a 129-amino-acid chain: Glycine cleavage system H protein (129 aa).

The region spanning 24 to 106 (IAVIGITAYA…YGDGWLIKVR (83 aa)) is the Lipoyl-binding domain. Lys65 is subject to N6-lipoyllysine.

The protein belongs to the GcvH family. As to quaternary structure, the glycine cleavage system is composed of four proteins: P, T, L and H. (R)-lipoate serves as cofactor.

The glycine cleavage system catalyzes the degradation of glycine. The H protein shuttles the methylamine group of glycine from the P protein to the T protein. This chain is Glycine cleavage system H protein, found in Synechococcus sp. (strain JA-2-3B'a(2-13)) (Cyanobacteria bacterium Yellowstone B-Prime).